A 455-amino-acid chain; its full sequence is Glutamyl-tRNA reductase (455 aa).

Substrate contacts are provided by residues 49 to 52 (TCNR), serine 109, 114 to 116 (EAQ), and glutamine 120. The active-site Nucleophile is cysteine 50. Position 190–195 (190–195 (GAGAMG)) interacts with NADP(+).

This sequence belongs to the glutamyl-tRNA reductase family. Homodimer.

It catalyses the reaction (S)-4-amino-5-oxopentanoate + tRNA(Glu) + NADP(+) = L-glutamyl-tRNA(Glu) + NADPH + H(+). Its pathway is porphyrin-containing compound metabolism; protoporphyrin-IX biosynthesis; 5-aminolevulinate from L-glutamyl-tRNA(Glu): step 1/2. Its function is as follows. Catalyzes the NADPH-dependent reduction of glutamyl-tRNA(Glu) to glutamate 1-semialdehyde (GSA). The chain is Glutamyl-tRNA reductase from Salinispora arenicola (strain CNS-205).